We begin with the raw amino-acid sequence, 166 residues long: KH homology domain-containing protein 1A (166 aa).

The KH; atypical domain maps to 19–78 (PLVFDMEEDKEDYIFGPHDEYLHTLEVHSNTLIQLERWFTPTGQTRVTVVGPLKARLWVM).

This sequence belongs to the KHDC1 family.

The protein localises to the cytoplasm. In terms of biological role, has pro-apoptotic activity. The sequence is that of KH homology domain-containing protein 1A (Khdc1a) from Mus musculus (Mouse).